The following is a 643-amino-acid chain: Phosphatidylinositol-3,5-bisphosphate 3-phosphatase MTMR2 (643 aa).

Polar residues-rich tracts occupy residues 1–12 (MEKSSSCESLGS) and 23–40 (DSLS…VHTK). The interval 1-54 (MEKSSSCESLGSQPAVARPPSVDSLSSASTSHSENSVHTKSASVVSSDSISTSA) is disordered. 2 positions are modified to phosphoserine: S6 and S9. Residues 41-54 (SASVVSSDSISTSA) are compositionally biased toward low complexity. The residue at position 58 (S58) is a Phosphoserine. One can recognise a GRAM domain in the interval 68 to 139 (NKLAEMEEPP…GVISRVEKIG (72 aa)). The Myotubularin phosphatase domain occupies 205–580 (GWKLYDSLSE…RHLELWVGYY (376 aa)). Positions 330, 355, and 356 each coordinate a 1,2-diacyl-sn-glycero-3-phospho-(1D-myo-inositol-3,5-bisphosphate). A 1,2-diacyl-sn-glycero-3-phospho-(1D-myo-inositol-3-phosphate) contacts are provided by N330, N355, and I356. Catalysis depends on C417, which acts as the Phosphocysteine intermediate. 8 residues coordinate a 1,2-diacyl-sn-glycero-3-phospho-(1D-myo-inositol-3,5-bisphosphate): S418, D419, G420, W421, D422, R423, R459, and R463. The a 1,2-diacyl-sn-glycero-3-phospho-(1D-myo-inositol-3-phosphate) site is built by S418, D419, G420, W421, D422, and R423. R463 contributes to the a 1,2-diacyl-sn-glycero-3-phospho-(1D-myo-inositol-3-phosphate) binding site. Residues 593–627 (IHNRYKELLAKRAELQKKVEELQREISNRSTSSSE) are a coiled coil. The tract at residues 614-643 (LQREISNRSTSSSERAGSPAQCVTPVQTVV) is disordered.

Belongs to the protein-tyrosine phosphatase family. Non-receptor class myotubularin subfamily. Homodimer (via coiled-coil domain). Heterotetramer consisting of one MTMR2 dimer and one SBF2/MTMR13 dimer; specifically in peripheral nerves stabilizes SBF2/MTMR13 at the membranes and increases MTMR2 catalytic activity towards phosphatidylinositol 3,5-bisphosphate and to a lesser extent towards phosphatidylinositol 3-phosphate. Heterodimer with SBF1/MTMR5; acts as an adapter for the phosphatase MTMR2 to regulate MTMR2 catalytic activity and subcellular location. Heterodimer with MTMR12. Post-translationally, phosphorylation at Ser-58 decreases MTMR2 localization to endocytic vesicular structures.

The protein resides in the cytoplasm. It localises to the early endosome membrane. The protein localises to the perinuclear region. It is found in the cell projection. Its subcellular location is the axon. The protein resides in the endosome membrane. The enzyme catalyses a 1,2-diacyl-sn-glycero-3-phospho-(1D-myo-inositol-3,5-bisphosphate) + H2O = a 1,2-diacyl-sn-glycero-3-phospho-(1D-myo-inositol-5-phosphate) + phosphate. It carries out the reaction a 1,2-diacyl-sn-glycero-3-phospho-(1D-myo-inositol-3-phosphate) + H2O = a 1,2-diacyl-sn-glycero-3-phospho-(1D-myo-inositol) + phosphate. The catalysed reaction is 1,2-dioctanoyl-sn-glycero-3-phospho-(1-D-myo-inositol-3-phosphate) + H2O = 1,2-dioctanoyl-sn-glycero-3-phospho-(1D-myo-inositol) + phosphate. It catalyses the reaction 1,2-dioctanoyl-sn-glycero-3-phospho-(1D-myo-inositol-3,5-bisphosphate) + H2O = 1,2-dioctanoyl-sn-glycero-3-phospho-(1D-myo-inositol-5-phosphate) + phosphate. Functionally, lipid phosphatase that specifically dephosphorylates the D-3 position of phosphatidylinositol 3-phosphate and phosphatidylinositol 3,5-bisphosphate, generating phosphatidylinositol and phosphatidylinositol 5-phosphate. Regulates the level of these phosphoinositides critical for various biological processes including autophagy initiation and autophagosome maturation. This chain is Phosphatidylinositol-3,5-bisphosphate 3-phosphatase MTMR2, found in Bos taurus (Bovine).